We begin with the raw amino-acid sequence, 361 residues long: S-adenosylmethionine:tRNA ribosyltransferase-isomerase (361 aa).

The protein belongs to the QueA family. As to quaternary structure, monomer.

The protein resides in the cytoplasm. The catalysed reaction is 7-aminomethyl-7-carbaguanosine(34) in tRNA + S-adenosyl-L-methionine = epoxyqueuosine(34) in tRNA + adenine + L-methionine + 2 H(+). Its pathway is tRNA modification; tRNA-queuosine biosynthesis. In terms of biological role, transfers and isomerizes the ribose moiety from AdoMet to the 7-aminomethyl group of 7-deazaguanine (preQ1-tRNA) to give epoxyqueuosine (oQ-tRNA). This is S-adenosylmethionine:tRNA ribosyltransferase-isomerase from Afipia carboxidovorans (strain ATCC 49405 / DSM 1227 / KCTC 32145 / OM5) (Oligotropha carboxidovorans).